A 390-amino-acid chain; its full sequence is MKGDQEVQVIVQQGKEPIPTDQDERSSVSGSQTKLSHSNTYKRWLRVAIYTFFVISGQSVATILGRLYYENGGNSKWLATVVQLVGFPILLPYHLLSVKTHTTTQRDGKLTSLRNRALVYIVLGLLVGAACYLYSIGLLYLPVSTLSLICASQLAFTAFFSYLLNSQKLTPIILNSLFLLTISSTLLAFNNEESDSKKVTKGEYVKGFVCTVGASAGFGLLLSLQQLAFRKVLKKQTFSEVINMIIYMSLVASCVSVVGLFASSEWKTLSSEMENYKLGKVSYVMNLVWTAVTWQVFSIGCTGLIFELSSLFSNAISALGLPVVPILAVIIFHDKMNGLKVISMILAIWGFVSYVYQQYLDETNLKKSNEIPTTESPDRPEAEGSSEQSK.

Residues Gln-12–Lys-34 form a disordered region. The next 10 membrane-spanning stretches (helical) occupy residues Trp-44–Leu-64, Leu-78–Val-98, Leu-118–Leu-138, Tyr-140–Phe-160, Leu-169–Phe-189, Tyr-204–Leu-224, Val-241–Phe-261, Leu-287–Glu-307, Phe-312–Phe-332, and Met-336–Tyr-356. A disordered region spans residues Lys-367–Lys-390.

Belongs to the purine permeases (TC 2.A.7.14) family. Expressed in mesophyll cells.

It localises to the membrane. The chain is Purine permease 21 from Arabidopsis thaliana (Mouse-ear cress).